Here is a 91-residue protein sequence, read N- to C-terminus: Acylphosphatase (91 aa).

The region spanning 3-90 is the Acylphosphatase-like domain; it reads RVLIRVKGKV…EIYLDFSITQ (88 aa). Active-site residues include Arg18 and Asn36.

It belongs to the acylphosphatase family.

The enzyme catalyses an acyl phosphate + H2O = a carboxylate + phosphate + H(+). The protein is Acylphosphatase (acyP) of Shewanella amazonensis (strain ATCC BAA-1098 / SB2B).